The sequence spans 130 residues: Phosphoribosyl-ATP pyrophosphatase (130 aa).

The protein belongs to the PRA-PH family.

Its subcellular location is the cytoplasm. The catalysed reaction is 1-(5-phospho-beta-D-ribosyl)-ATP + H2O = 1-(5-phospho-beta-D-ribosyl)-5'-AMP + diphosphate + H(+). Its pathway is amino-acid biosynthesis; L-histidine biosynthesis; L-histidine from 5-phospho-alpha-D-ribose 1-diphosphate: step 2/9. This chain is Phosphoribosyl-ATP pyrophosphatase, found in Albidiferax ferrireducens (strain ATCC BAA-621 / DSM 15236 / T118) (Rhodoferax ferrireducens).